The following is a 291-amino-acid chain: Pantothenate synthetase (291 aa).

Residue 33-40 participates in ATP binding; sequence MGALHEGH. Catalysis depends on H40, which acts as the Proton donor. A (R)-pantoate-binding site is contributed by Q64. Residue Q64 coordinates beta-alanine. Position 157-160 (157-160) interacts with ATP; it reads GEKD. A (R)-pantoate-binding site is contributed by Q163. ATP is bound by residues V186 and 194-197; that span reads LSSR.

It belongs to the pantothenate synthetase family. In terms of assembly, homodimer.

It is found in the cytoplasm. It carries out the reaction (R)-pantoate + beta-alanine + ATP = (R)-pantothenate + AMP + diphosphate + H(+). It functions in the pathway cofactor biosynthesis; (R)-pantothenate biosynthesis; (R)-pantothenate from (R)-pantoate and beta-alanine: step 1/1. Its function is as follows. Catalyzes the condensation of pantoate with beta-alanine in an ATP-dependent reaction via a pantoyl-adenylate intermediate. This is Pantothenate synthetase from Rubrobacter xylanophilus (strain DSM 9941 / JCM 11954 / NBRC 16129 / PRD-1).